Here is a 187-residue protein sequence, read N- to C-terminus: Probable chemoreceptor glutamine deamidase CheD (187 aa).

Positions 164-187 are disordered; the sequence is APQDVRRPTPPPMPAVASGDVDLF.

The protein belongs to the CheD family.

It catalyses the reaction L-glutaminyl-[protein] + H2O = L-glutamyl-[protein] + NH4(+). Functionally, probably deamidates glutamine residues to glutamate on methyl-accepting chemotaxis receptors (MCPs), playing an important role in chemotaxis. This chain is Probable chemoreceptor glutamine deamidase CheD, found in Caulobacter vibrioides (strain ATCC 19089 / CIP 103742 / CB 15) (Caulobacter crescentus).